The primary structure comprises 77 residues: Cell division topological specificity factor (77 aa).

The protein belongs to the MinE family.

Functionally, prevents the cell division inhibition by proteins MinC and MinD at internal division sites while permitting inhibition at polar sites. This ensures cell division at the proper site by restricting the formation of a division septum at the midpoint of the long axis of the cell. The polypeptide is Cell division topological specificity factor (Helicobacter pylori (strain P12)).